A 395-amino-acid polypeptide reads, in one-letter code: Ankyrin repeat domain-containing protein 65 (395 aa).

10 ANK repeats span residues 52–81, 85–114, 118–147, 151–180, 185–212, 213–241, 245–274, 278–307, 311–340, and 344–373; these read QAWG…SVEE, AGRT…QVGA, AGRT…PANA, AGLT…PGPT, RGWT…GGAR, LDSV…PVDA, VGAT…DPSL, HGRS…EVDS, LGLT…EINA, and LHKT…SPTL.

This chain is Ankyrin repeat domain-containing protein 65 (ANKRD65), found in Bos taurus (Bovine).